A 363-amino-acid polypeptide reads, in one-letter code: MAAAAMAAAAGGGAGAARSLSRFRGCLAGALLGDCVGSFYEAHDTVDLTSVLRHVQSLEPDPGTPGSERTEALYYTDDTAMARALVQSLLAKEAFDEVDMAHRFAQEYKKDPDRGYGAGVVTVFKKLLNPKCRDVFEPARAQFNGKGSYGNGGAMRVAGISLAYSSVQDVQKFARLSAQLTHASSLGYNGAILQALAVHLALQGESSSEHFLKQLLGHMEDLEGDAQSVLDARELGMEERPYSSRLKKIGELLDQASVTREEVVSELGNGIAAFESVPTAIYCFLRCMEPDPEIPSAFNSLQRTLIYSISLGGDTDTIATMAGAIAGAYYGMDQVPESWQQSCEGYEETDILAQSLHRVFQKS.

Residue glutamate 41 participates in Mg(2+) binding. A Phosphothreonine modification is found at threonine 64. Positions 76, 77, and 78 each coordinate Mg(2+). Aspartate 77 is a substrate binding site. Substrate contacts are provided by residues 146–152 (KGSYGNG), histidine 182, leucine 235, and isoleucine 271. Aspartate 314, aspartate 316, and threonine 317 together coordinate Mg(2+).

The protein belongs to the ADP-ribosylglycohydrolase family. As to quaternary structure, monomer. It depends on Mg(2+) as a cofactor. Ubiquitous. Expressed in skin fibroblasts.

The protein localises to the nucleus. It is found in the cytoplasm. Its subcellular location is the chromosome. It localises to the mitochondrion matrix. It carries out the reaction [(1''-&gt;2')-ADP-alpha-D-ribose](n) + H2O = [(1''-&gt;2')-ADP-alpha-D-ribose](n-1) + ADP-D-ribose. The enzyme catalyses 1''-O-acetyl-ADP-alpha-D-ribose + H2O = ADP-D-ribose + acetate + H(+). It catalyses the reaction O-(ADP-D-ribosyl)-L-seryl-[protein] + H2O = ADP-D-ribose + L-seryl-[protein]. The catalysed reaction is alpha-NAD(+) + H2O = ADP-D-ribose + nicotinamide + H(+). Its activity is regulated as follows. The protein undergoes a dramatic conformational switch from closed to open states upon substrate-binding, which enables specific substrate recognition for the 1''-O-linkage. The glutamate flap (Glu-41) blocks substrate entrance to Mg(2+) in the unliganded closed state. In presence of substrate, Glu-41 is ejected from the active site: this closed-to-open transition significantly widens the substrate-binding channel and precisely positions the scissile 1''-O-linkage for cleavage while securing tightly 2'- and 3'-hydroxyls of ADP-ribose. Its function is as follows. ADP-ribosylhydrolase that preferentially hydrolyzes the scissile alpha-O-linkage attached to the anomeric C1'' position of ADP-ribose and acts on different substrates, such as proteins ADP-ribosylated on serine and threonine, free poly(ADP-ribose) and O-acetyl-ADP-D-ribose. Specifically acts as a serine mono-ADP-ribosylhydrolase by mediating the removal of mono-ADP-ribose attached to serine residues on proteins, thereby playing a key role in DNA damage response. Serine ADP-ribosylation of proteins constitutes the primary form of ADP-ribosylation of proteins in response to DNA damage. Does not hydrolyze ADP-ribosyl-arginine, -cysteine, -diphthamide, or -asparagine bonds. Also able to degrade protein free poly(ADP-ribose), which is synthesized in response to DNA damage: free poly(ADP-ribose) acts as a potent cell death signal and its degradation by ADPRHL2 protects cells from poly(ADP-ribose)-dependent cell death, a process named parthanatos. Also hydrolyzes free poly(ADP-ribose) in mitochondria. Specifically digests O-acetyl-ADP-D-ribose, a product of deacetylation reactions catalyzed by sirtuins. Specifically degrades 1''-O-acetyl-ADP-D-ribose isomer, rather than 2''-O-acetyl-ADP-D-ribose or 3''-O-acetyl-ADP-D-ribose isomers. The sequence is that of ADP-ribosylhydrolase ARH3 from Homo sapiens (Human).